The following is a 96-amino-acid chain: Small ribosomal subunit protein bS6 (96 aa).

This sequence belongs to the bacterial ribosomal protein bS6 family.

Functionally, binds together with bS18 to 16S ribosomal RNA. This chain is Small ribosomal subunit protein bS6, found in Carboxydothermus hydrogenoformans (strain ATCC BAA-161 / DSM 6008 / Z-2901).